The primary structure comprises 378 residues: Lipoyl synthase, mitochondrial (378 aa).

Residues Cys109, Cys114, Cys120, Cys140, Cys144, Cys147, and Ser356 each contribute to the [4Fe-4S] cluster site. A Radical SAM core domain is found at 125–345 (ETGTATATIM…QTLGMEMGFR (221 aa)).

This sequence belongs to the radical SAM superfamily. Lipoyl synthase family. [4Fe-4S] cluster serves as cofactor.

It localises to the mitochondrion. The enzyme catalyses [[Fe-S] cluster scaffold protein carrying a second [4Fe-4S](2+) cluster] + N(6)-octanoyl-L-lysyl-[protein] + 2 oxidized [2Fe-2S]-[ferredoxin] + 2 S-adenosyl-L-methionine + 4 H(+) = [[Fe-S] cluster scaffold protein] + N(6)-[(R)-dihydrolipoyl]-L-lysyl-[protein] + 4 Fe(3+) + 2 hydrogen sulfide + 2 5'-deoxyadenosine + 2 L-methionine + 2 reduced [2Fe-2S]-[ferredoxin]. It functions in the pathway protein modification; protein lipoylation via endogenous pathway; protein N(6)-(lipoyl)lysine from octanoyl-[acyl-carrier-protein]: step 2/2. In terms of biological role, catalyzes the radical-mediated insertion of two sulfur atoms into the C-6 and C-8 positions of the octanoyl moiety bound to the lipoyl domains of lipoate-dependent enzymes, thereby converting the octanoylated domains into lipoylated derivatives. This chain is Lipoyl synthase, mitochondrial, found in Medicago truncatula (Barrel medic).